Reading from the N-terminus, the 277-residue chain is Protein G1-like2 (277 aa).

A compositionally biased stretch (gly residues) spans 1-16; that stretch reads MQGGGGGDSSGGGGGE. Disordered regions lie at residues 1 to 28, 141 to 203, and 225 to 245; these read MQGGGGGDSSGGGGGEAPRPSRYESQKR, RGIA…GHFF, and HQVSNAGNGGNTNTNTNTNTG. Over residues 19–28 the composition is skewed to basic and acidic residues; it reads RPSRYESQKR. The 128-residue stretch at 22–149 folds into the ALOG domain; that stretch reads RYESQKRRDW…ARGIAYEKKR (128 aa). The Nuclear localization signal signature appears at 147-151; sequence KKRRK. A compositionally biased stretch (low complexity) spans 154 to 177; that stretch reads PTSSSSSQAAAAAAAATSPASPAA. Residues 178 to 187 show a composition bias toward pro residues; that stretch reads SPTPPPPPPT.

It belongs to the plant homeotic and developmental regulators ALOG protein family.

The protein localises to the nucleus. In terms of biological role, probable transcription regulator that acts as a developmental regulator by promoting cell growth in response to light. The sequence is that of Protein G1-like2 (G1L2) from Oryza sativa subsp. japonica (Rice).